Here is a 240-residue protein sequence, read N- to C-terminus: 6-carboxyhexanoate--CoA ligase (240 aa).

Belongs to the BioW family. In terms of assembly, homodimer. It depends on Mg(2+) as a cofactor.

The enzyme catalyses heptanedioate + ATP + CoA = 6-carboxyhexanoyl-CoA + AMP + diphosphate. The protein operates within metabolic intermediate metabolism; pimeloyl-CoA biosynthesis; pimeloyl-CoA from pimelate: step 1/1. In terms of biological role, catalyzes the transformation of pimelate into pimeloyl-CoA with concomitant hydrolysis of ATP to AMP. The chain is 6-carboxyhexanoate--CoA ligase from Aquifex aeolicus (strain VF5).